A 204-amino-acid polypeptide reads, in one-letter code: Sex-determining region Y protein (204 aa).

The interval 59–136 (RVKRPMNAFI…YKYRPRRKAK (78 aa)) is sufficient for interaction with KPNB1. The segment at residues 60 to 128 (VKRPMNAFIV…MHREKYPNYK (69 aa)) is a DNA-binding region (HMG box). Required for nuclear localization stretches follow at residues 61–77 (KRPM…QRRK) and 130–136 (RPRRKAK). Positions 107-139 (WPFFQEAQKLQAMHREKYPNYKYRPRRKAKMLP) are sufficient for interaction with EP300. Lys-136 carries the N6-acetyllysine modification. The segment at 138–155 (LPKNCSLLPADPASVLCS) is necessary for interaction with ZNF208 isoform KRAB-O. The tract at residues 175–204 (RMEHQLGHLPPINAASSPQQRDRYSHWTKL) is disordered. Basic and acidic residues predominate over residues 194-204 (QRDRYSHWTKL). The tract at residues 198–204 (YSHWTKL) is necessary for interaction with SLC9A3R2.

It belongs to the SRY family. In terms of assembly, interacts with CALM, EP300, HDAC3, KPNB1, ZNF208 isoform KRAB-O, PARP1, SLC9A3R2 and WT1. The interaction with EP300 modulates its DNA-binding activity. The interaction with KPNB1 is sensitive to dissociation by Ran in the GTP-bound form. Interaction with PARP1 impaired its DNA-binding activity. Post-translationally, phosphorylated on serine residues by PKA. Phosphorylation by PKA enhances its DNA-binding activity and stimulates transcription repression. Acetylation of Lys-136 contributes to its nuclear localization and enhances its interaction with KPNB1. Deacetylated by HDAC3. In terms of processing, poly-ADP-ribosylated by PARP1. ADP-ribosylation reduces its DNA-binding activity.

Its subcellular location is the nucleus speckle. It localises to the cytoplasm. The protein localises to the nucleus. Functionally, transcriptional regulator that controls a genetic switch in male development. It is necessary and sufficient for initiating male sex determination by directing the development of supporting cell precursors (pre-Sertoli cells) as Sertoli rather than granulosa cells. Involved in different aspects of gene regulation including promoter activation or repression. Binds to the DNA consensus sequence 5'-[AT]AACAA[AT]-3'. SRY HMG box recognizes DNA by partial intercalation in the minor groove and promotes DNA bending. Also involved in pre-mRNA splicing. In male adult brain involved in the maintenance of motor functions of dopaminergic neurons. The sequence is that of Sex-determining region Y protein from Homo sapiens (Human).